The chain runs to 228 residues: HTH-type transcriptional repressor RspR (228 aa).

Residues 11 to 78 enclose the HTH gntR-type domain; it reads QPVNQQIYRI…PQRGSYVNKI (68 aa). The segment at residues 38–57 is a DNA-binding region (H-T-H motif); that stretch reads EKEVSVRFNVSRQPVREAFI.

Functionally, repressor of the rspAB operon. Acts by binding directly to the upstream region of rspA. This Escherichia coli (strain K12) protein is HTH-type transcriptional repressor RspR (rspR).